The following is a 422-amino-acid chain: Light-independent protochlorophyllide reductase subunit N (422 aa).

[4Fe-4S] cluster is bound by residues Cys-26, Cys-51, and Cys-112.

This sequence belongs to the BchN/ChlN family. In terms of assembly, protochlorophyllide reductase is composed of three subunits; BchL, BchN and BchB. Forms a heterotetramer of two BchB and two BchN subunits. The cofactor is [4Fe-4S] cluster.

The catalysed reaction is chlorophyllide a + oxidized 2[4Fe-4S]-[ferredoxin] + 2 ADP + 2 phosphate = protochlorophyllide a + reduced 2[4Fe-4S]-[ferredoxin] + 2 ATP + 2 H2O. The protein operates within porphyrin-containing compound metabolism; bacteriochlorophyll biosynthesis (light-independent). Its function is as follows. Component of the dark-operative protochlorophyllide reductase (DPOR) that uses Mg-ATP and reduced ferredoxin to reduce ring D of protochlorophyllide (Pchlide) to form chlorophyllide a (Chlide). This reaction is light-independent. The NB-protein (BchN-BchB) is the catalytic component of the complex. This is Light-independent protochlorophyllide reductase subunit N from Acidiphilium rubrum.